We begin with the raw amino-acid sequence, 516 residues long: L-amino acid oxidase bordonein-L (516 aa).

An N-terminal signal peptide occupies residues 1–18; it reads MNVFFMFSLLFLAALGSC. A disulfide bond links cysteine 28 and cysteine 189. Residues 61–62, 81–82, arginine 89, and 103–106 each bind FAD; these read MA, EA, and GPMR. The substrate site is built by arginine 106 and histidine 239. Residue valine 279 coordinates FAD. Cysteine 349 and cysteine 430 form a disulfide bridge. A glycan (N-linked (GlcNAc...) asparagine) is linked at asparagine 379. Tyrosine 390 is a binding site for substrate. FAD-binding positions include glutamate 475 and 482 to 487; that span reads GWIDST. 482–483 is a binding site for substrate; that stretch reads GW.

Homodimer; non-covalently linked. Requires FAD as cofactor. N-glycosylated. N-glycan probably consists of the disaccharide N-acetylglucosamine-fucose (HexNAc-Fuc). In terms of tissue distribution, expressed by the venom gland.

Its subcellular location is the secreted. The catalysed reaction is an L-alpha-amino acid + O2 + H2O = a 2-oxocarboxylate + H2O2 + NH4(+). It catalyses the reaction L-leucine + O2 + H2O = 4-methyl-2-oxopentanoate + H2O2 + NH4(+). It carries out the reaction L-phenylalanine + O2 + H2O = 3-phenylpyruvate + H2O2 + NH4(+). The enzyme catalyses L-tryptophan + O2 + H2O = indole-3-pyruvate + H2O2 + NH4(+). The catalysed reaction is L-methionine + O2 + H2O = 4-methylsulfanyl-2-oxobutanoate + H2O2 + NH4(+). It catalyses the reaction L-isoleucine + O2 + H2O = (S)-3-methyl-2-oxopentanoate + H2O2 + NH4(+). It carries out the reaction L-arginine + O2 + H2O = 5-guanidino-2-oxopentanoate + H2O2 + NH4(+). The enzyme catalyses L-histidine + O2 + H2O = 3-(imidazol-5-yl)pyruvate + H2O2 + NH4(+). In terms of biological role, catalyzes an oxidative deamination of predominantly hydrophobic and aromatic L-amino acids, thus producing hydrogen peroxide that may contribute to the diverse toxic effects of this enzyme. Is highly active on L-Met, L-Leu, L-Trp, and L-Phe, moderately active on L-Ile, L-His, and L-Arg, and weakly or not active on L-Gln, L-Val, L-Asn, L-Ala, L-Lys, L-Ser, L-Thr, L-Pro, L-Asp, L-Gly, L-Tyr, L-Cys and L-Glu. This enzyme exhibits diverse biological activities, such as hemorrhage, hemolysis, edema, apoptosis of vascular endothelial cells or tumor cell lines, antibacterial and antiparasitic activities, as well as regulation of platelet aggregation. Its effect on platelets is controversial, since it either induces aggregation or inhibits agonist-induced aggregation. These different effects are probably due to different experimental conditions. In vitro, the enzyme exhibits cytotoxicity against fibroblast cell line and kills Leishmania amazonensis promastigotes, intensified by substrate addition. The polypeptide is L-amino acid oxidase bordonein-L (Crotalus durissus terrificus (South American rattlesnake)).